The chain runs to 428 residues: Adenylosuccinate synthetase (428 aa).

Residues 12–18 and 40–42 each bind GTP; these read GDEGKGK and GHT. Asp-13 (proton acceptor) is an active-site residue. Mg(2+) is bound by residues Asp-13 and Gly-40. IMP contacts are provided by residues 13-16, 38-41, Thr-128, Arg-142, Gln-223, Thr-238, and Arg-302; these read DEGK and NAGH. The active-site Proton donor is the His-41. 298 to 304 contributes to the substrate binding site; it reads TTTGRPR. GTP is bound by residues Arg-304, 330 to 332, and 412 to 414; these read SID and SVG.

Belongs to the adenylosuccinate synthetase family. Homodimer. Mg(2+) is required as a cofactor.

It is found in the cytoplasm. The catalysed reaction is IMP + L-aspartate + GTP = N(6)-(1,2-dicarboxyethyl)-AMP + GDP + phosphate + 2 H(+). The protein operates within purine metabolism; AMP biosynthesis via de novo pathway; AMP from IMP: step 1/2. Plays an important role in the de novo pathway of purine nucleotide biosynthesis. Catalyzes the first committed step in the biosynthesis of AMP from IMP. The polypeptide is Adenylosuccinate synthetase (Shouchella clausii (strain KSM-K16) (Alkalihalobacillus clausii)).